A 305-amino-acid chain; its full sequence is Translation initiation factor eIF2B subunit alpha (305 aa).

It belongs to the eIF-2B alpha/beta/delta subunits family. As to quaternary structure, component of the translation initiation factor 2B (eIF2B) complex which is a heterodecamer of two sets of five different subunits: alpha, beta, gamma, delta and epsilon. Subunits alpha, beta and delta comprise a regulatory subcomplex and subunits epsilon and gamma comprise a catalytic subcomplex. Within the complex, the hexameric regulatory complex resides at the center, with the two heterodimeric catalytic subcomplexes bound on opposite sides.

It localises to the cytoplasm. The protein resides in the cytosol. With respect to regulation, activated by the chemical integrated stress response (ISR) inhibitor ISRIB which stimulates guanine nucleotide exchange factor activity for both phosphorylated and unphosphorylated eIF2. In terms of biological role, acts as a component of the translation initiation factor 2B (eIF2B) complex, which catalyzes the exchange of GDP for GTP on eukaryotic initiation factor 2 (eIF2) gamma subunit. Its guanine nucleotide exchange factor activity is repressed when bound to eIF2 complex phosphorylated on the alpha subunit, thereby limiting the amount of methionyl-initiator methionine tRNA available to the ribosome and consequently global translation is repressed. This is Translation initiation factor eIF2B subunit alpha (EIF2B1) from Bos taurus (Bovine).